The sequence spans 279 residues: Undecaprenyl-diphosphatase (279 aa).

The next 7 helical transmembrane spans lie at 10–30, 48–68, 96–116, 128–148, 203–223, 229–249, and 259–279; these read FICF…FLPI, LGVS…IYYF, LFIY…LIKL, GLFS…LSEI, SFLV…FSLF, IDII…IFAI, and NNTL…LTTL.

It belongs to the UppP family.

It localises to the cell inner membrane. The enzyme catalyses di-trans,octa-cis-undecaprenyl diphosphate + H2O = di-trans,octa-cis-undecaprenyl phosphate + phosphate + H(+). In terms of biological role, catalyzes the dephosphorylation of undecaprenyl diphosphate (UPP). Confers resistance to bacitracin. The chain is Undecaprenyl-diphosphatase from Prochlorococcus marinus (strain NATL1A).